A 98-amino-acid chain; its full sequence is YcgL domain-containing protein CJA_2437 (98 aa).

The 85-residue stretch at 3 to 87 folds into the YcgL domain; the sequence is IIAEIYRSPK…RDLVDAEAKR (85 aa).

The protein is YcgL domain-containing protein CJA_2437 of Cellvibrio japonicus (strain Ueda107) (Pseudomonas fluorescens subsp. cellulosa).